The sequence spans 1226 residues: DNA-directed RNA polymerase subunit beta (1226 aa).

This sequence belongs to the RNA polymerase beta chain family. In terms of assembly, the RNAP catalytic core consists of 2 alpha, 1 beta, 1 beta' and 1 omega subunit. When a sigma factor is associated with the core the holoenzyme is formed, which can initiate transcription.

The enzyme catalyses RNA(n) + a ribonucleoside 5'-triphosphate = RNA(n+1) + diphosphate. Its function is as follows. DNA-dependent RNA polymerase catalyzes the transcription of DNA into RNA using the four ribonucleoside triphosphates as substrates. This Leptospira borgpetersenii serovar Hardjo-bovis (strain JB197) protein is DNA-directed RNA polymerase subunit beta.